A 197-amino-acid polypeptide reads, in one-letter code: Peptidyl-tRNA hydrolase (197 aa).

Residue Y18 coordinates tRNA. Catalysis depends on H23, which acts as the Proton acceptor. The tRNA site is built by F69, N71, and N117.

This sequence belongs to the PTH family. As to quaternary structure, monomer.

It localises to the cytoplasm. The enzyme catalyses an N-acyl-L-alpha-aminoacyl-tRNA + H2O = an N-acyl-L-amino acid + a tRNA + H(+). In terms of biological role, hydrolyzes ribosome-free peptidyl-tRNAs (with 1 or more amino acids incorporated), which drop off the ribosome during protein synthesis, or as a result of ribosome stalling. Functionally, catalyzes the release of premature peptidyl moieties from peptidyl-tRNA molecules trapped in stalled 50S ribosomal subunits, and thus maintains levels of free tRNAs and 50S ribosomes. In Psychromonas ingrahamii (strain DSM 17664 / CCUG 51855 / 37), this protein is Peptidyl-tRNA hydrolase.